A 203-amino-acid chain; its full sequence is Transmembrane protein 269 (203 aa).

Transmembrane regions (helical) follow at residues 60-80, 124-144, and 157-177; these read GLAS…LAII, FILC…SYYP, and LVYI…SAFY.

It is found in the membrane. This Homo sapiens (Human) protein is Transmembrane protein 269.